Here is a 430-residue protein sequence, read N- to C-terminus: Aspartate aminotransferase, mitochondrial (430 aa).

Residues 1-29 (MALLHSGRALPGIAAAFHPGLAAAASARA) constitute a mitochondrion transit peptide. Thr-48 carries the post-translational modification Phosphothreonine. N6-acetyllysine is present on Lys-59. Gly-65 serves as a coordination point for substrate. Lys-73 is modified (N6-acetyllysine; alternate). At Lys-73 the chain carries N6-succinyllysine; alternate. An N6-acetyllysine modification is found at Lys-82. Residue Lys-90 is modified to N6-acetyllysine; alternate. N6-succinyllysine; alternate is present on Lys-90. The residue at position 96 (Tyr-96) is a 3'-nitrotyrosine; alternate. Tyr-96 carries the post-translational modification Phosphotyrosine; alternate. An N6-acetyllysine; alternate mark is found at Lys-107 and Lys-122. 2 positions are modified to N6-succinyllysine; alternate: Lys-107 and Lys-122. Ser-143 carries the phosphoserine modification. Lys-159 is subject to N6-acetyllysine; alternate. Residue Lys-159 is modified to N6-succinyllysine; alternate. Trp-162 provides a ligand contact to substrate. An N6-acetyllysine; alternate modification is found at Lys-185. Lys-185 is modified (N6-succinyllysine; alternate). Position 215 (Asn-215) interacts with substrate. The residue at position 227 (Lys-227) is an N6-succinyllysine. Lys-234 is modified (N6-acetyllysine). An N6-acetyllysine; alternate mark is found at Lys-279 and Lys-296. An N6-(pyridoxal phosphate)lysine; alternate modification is found at Lys-279. The residue at position 296 (Lys-296) is an N6-succinyllysine; alternate. N6-acetyllysine is present on Lys-302. Lys-309 carries the N6-acetyllysine; alternate modification. Lys-309 bears the N6-succinyllysine; alternate mark. Arg-313 carries the asymmetric dimethylarginine modification. Phosphothreonine is present on Thr-333. At Lys-338 the chain carries N6-acetyllysine; alternate. Lys-338 carries the N6-succinyllysine; alternate modification. An N6-acetyllysine modification is found at Lys-345. Lys-363 carries the N6-acetyllysine; alternate modification. Lys-363 carries the N6-succinyllysine; alternate modification. An N6-acetyllysine mark is found at Lys-364 and Lys-387. Lys-396 and Lys-404 each carry N6-acetyllysine; alternate. N6-succinyllysine; alternate is present on residues Lys-396 and Lys-404. Residue Arg-407 coordinates substrate.

This sequence belongs to the class-I pyridoxal-phosphate-dependent aminotransferase family. Homodimer. Pyridoxal 5'-phosphate serves as cofactor.

Its subcellular location is the mitochondrion matrix. It localises to the cell membrane. The catalysed reaction is L-aspartate + 2-oxoglutarate = oxaloacetate + L-glutamate. It catalyses the reaction L-kynurenine + 2-oxoglutarate = kynurenate + L-glutamate + H2O. Catalyzes the irreversible transamination of the L-tryptophan metabolite L-kynurenine to form kynurenic acid (KA). As a member of the malate-aspartate shuttle, it has a key role in the intracellular NAD(H) redox balance. Is important for metabolite exchange between mitochondria and cytosol, and for amino acid metabolism. Facilitates cellular uptake of long-chain free fatty acids. This is Aspartate aminotransferase, mitochondrial (GOT2) from Pongo abelii (Sumatran orangutan).